The sequence spans 304 residues: Opsin-1 (304 aa).

Residues methionine 1–arginine 45 are Extracellular-facing. Residues threonine 46–tryptophan 66 traverse the membrane as a helical segment. The helical transmembrane segment at leucine 74 to alanine 94 threads the bilayer. The chain crosses the membrane as a helical span at residues tyrosine 129–valine 149. Residues threonine 154–glycine 174 traverse the membrane as a helical segment. The helical transmembrane segment at tryptophan 183–histidine 203 threads the bilayer. The chain crosses the membrane as a helical span at residues phenylalanine 219 to isoleucine 239. A helical transmembrane segment spans residues isoleucine 252 to leucine 272. Lysine 263 is subject to N6-(retinylidene)lysine. Topologically, residues serine 273–aspartate 304 are cytoplasmic.

This sequence belongs to the archaeal/bacterial/fungal opsin family. Post-translationally, binds all-trans retinal via a protonated Schiff base linkage.

The protein resides in the membrane. Its function is as follows. Could facilitate a sensory photoresponse. The protein is Opsin-1 (nop-1) of Neurospora crassa (strain ATCC 24698 / 74-OR23-1A / CBS 708.71 / DSM 1257 / FGSC 987).